The chain runs to 424 residues: Gamma-glutamyl phosphate reductase (424 aa).

This sequence belongs to the gamma-glutamyl phosphate reductase family.

The protein localises to the cytoplasm. It catalyses the reaction L-glutamate 5-semialdehyde + phosphate + NADP(+) = L-glutamyl 5-phosphate + NADPH + H(+). Its pathway is amino-acid biosynthesis; L-proline biosynthesis; L-glutamate 5-semialdehyde from L-glutamate: step 2/2. Catalyzes the NADPH-dependent reduction of L-glutamate 5-phosphate into L-glutamate 5-semialdehyde and phosphate. The product spontaneously undergoes cyclization to form 1-pyrroline-5-carboxylate. In Dehalococcoides mccartyi (strain ATCC BAA-2100 / JCM 16839 / KCTC 5957 / BAV1), this protein is Gamma-glutamyl phosphate reductase.